Here is a 754-residue protein sequence, read N- to C-terminus: 1,4-alpha-glucan branching enzyme GlgB (754 aa).

The active-site Nucleophile is the Asp-431. Glu-484 serves as the catalytic Proton donor.

The protein belongs to the glycosyl hydrolase 13 family. GlgB subfamily. In terms of assembly, monomer.

It catalyses the reaction Transfers a segment of a (1-&gt;4)-alpha-D-glucan chain to a primary hydroxy group in a similar glucan chain.. The protein operates within glycan biosynthesis; glycogen biosynthesis. Catalyzes the formation of the alpha-1,6-glucosidic linkages in glycogen by scission of a 1,4-alpha-linked oligosaccharide from growing alpha-1,4-glucan chains and the subsequent attachment of the oligosaccharide to the alpha-1,6 position. This Prochlorococcus marinus subsp. pastoris (strain CCMP1986 / NIES-2087 / MED4) protein is 1,4-alpha-glucan branching enzyme GlgB.